We begin with the raw amino-acid sequence, 357 residues long: Isopentenyl-diphosphate delta-isomerase (357 aa).

A substrate-binding site is contributed by 13 to 14 (RK). FMN is bound by residues Ser-71, 72–74 (SMT), Ser-102, and Asn-131. 102-104 (SMR) provides a ligand contact to substrate. Residue Gln-166 participates in substrate binding. Glu-167 serves as a coordination point for Mg(2+). Residues Lys-198 and 311 to 312 (AR) each bind FMN.

It belongs to the IPP isomerase type 2 family. In terms of assembly, homooctamer. Dimer of tetramers. FMN serves as cofactor. The cofactor is NADPH. Mg(2+) is required as a cofactor.

The protein resides in the cytoplasm. The enzyme catalyses isopentenyl diphosphate = dimethylallyl diphosphate. Functionally, involved in the biosynthesis of isoprenoids. Catalyzes the 1,3-allylic rearrangement of the homoallylic substrate isopentenyl (IPP) to its allylic isomer, dimethylallyl diphosphate (DMAPP). This chain is Isopentenyl-diphosphate delta-isomerase, found in Chlorobium chlorochromatii (strain CaD3).